We begin with the raw amino-acid sequence, 103 residues long: MFKDFDFSKMGEMLSEAQKKAAEFENEIAAKEFVAKSGGGLISVKANGRSQILDISIDDTLLEDKESLQILLISAINDAIKLSEDEKKRAASAMFGGLGGFGV.

Belongs to the YbaB/EbfC family. As to quaternary structure, homodimer.

It localises to the cytoplasm. The protein resides in the nucleoid. In terms of biological role, binds to DNA and alters its conformation. May be involved in regulation of gene expression, nucleoid organization and DNA protection. The sequence is that of Nucleoid-associated protein CFF8240_0066 from Campylobacter fetus subsp. fetus (strain 82-40).